We begin with the raw amino-acid sequence, 293 residues long: 4-hydroxy-tetrahydrodipicolinate synthase (293 aa).

T46 provides a ligand contact to pyruvate. Catalysis depends on Y133, which acts as the Proton donor/acceptor. Catalysis depends on K161, which acts as the Schiff-base intermediate with substrate. Residue V202 participates in pyruvate binding.

The protein belongs to the DapA family. Homotetramer; dimer of dimers.

The protein resides in the cytoplasm. It carries out the reaction L-aspartate 4-semialdehyde + pyruvate = (2S,4S)-4-hydroxy-2,3,4,5-tetrahydrodipicolinate + H2O + H(+). It participates in amino-acid biosynthesis; L-lysine biosynthesis via DAP pathway; (S)-tetrahydrodipicolinate from L-aspartate: step 3/4. In terms of biological role, catalyzes the condensation of (S)-aspartate-beta-semialdehyde [(S)-ASA] and pyruvate to 4-hydroxy-tetrahydrodipicolinate (HTPA). The sequence is that of 4-hydroxy-tetrahydrodipicolinate synthase from Wolbachia pipientis subsp. Culex pipiens (strain wPip).